We begin with the raw amino-acid sequence, 620 residues long: Ran-binding protein 10 (620 aa).

Positions 1–38 (MAAATADPGAGNPQAGDSSGGDSGGGLPSPGEQELSRR) are disordered. Ala2 is modified (N-acetylalanine). The segment covering 18 to 28 (SSGGDSGGGLP) has biased composition (gly residues). The B30.2/SPRY domain occupies 35-222 (LSRRLQRLYP…VDANFGQQPF (188 aa)). One can recognise a LisH domain in the interval 253–285 (WQAVLQNMVSSYLVHHGYCSTATAFARMTETPI). The CTLH domain occupies 291–348 (SIKNRQKIQKLVLEGRVGEAIETTQRFYPGLLEHNPNLLFMLKCRQFVEMVNGTDSEV). Residues 347–398 (EVRSLSSRSPKSQDSYPGSPSLSPRHGPSSSHIHNTGADSPSCSNGVASTKN) are compositionally biased toward polar residues. The interval 347 to 460 (EVRSLSSRSP…SDSEMEMEAE (114 aa)) is disordered. A Phosphoserine modification is found at Ser361. The residue at position 362 (Tyr362) is a Phosphotyrosine. Phosphoserine occurs at positions 365, 367, 369, and 422. The segment covering 409 to 436 (SSSSSSSSSSSSSSPSSVNYSESNSTDS) has biased composition (low complexity). Over residues 437-450 (TKSQPHSSTSNQET) the composition is skewed to polar residues. Phosphoserine is present on residues Ser451 and Ser453.

This sequence belongs to the RANBP9/10 family. May form homodimers. Identified in the CTLH complex that contains GID4, RANBP9 and/or RANBP10, MKLN1, MAEA, RMND5A (or alternatively its paralog RMND5B), GID8, ARMC8, WDR26 and YPEL5. Within this complex, MAEA, RMND5A (or alternatively its paralog RMND5B), GID8, WDR26, and RANBP9 and/or RANBP10 form the catalytic core, while GID4, MKLN1, ARMC8 and YPEL5 have ancillary roles. Interacts with RAN and RANBP9. Interacts with the HGF receptor MET. Interacts with AR. Interacts with TUBB1. Interacts with YPEL5. May interact with TUBB5. Interacts with DDX4. In terms of tissue distribution, expressed at highest levels in spleen and liver. Expressed in megakaryocytes and platelets (at protein level).

Its subcellular location is the cytoplasm. It is found in the nucleus. Its function is as follows. May act as an adapter protein to couple membrane receptors to intracellular signaling pathways. Core component of the CTLH E3 ubiquitin-protein ligase complex that selectively accepts ubiquitin from UBE2H and mediates ubiquitination and subsequent proteasomal degradation of the transcription factor HBP1. Enhances dihydrotestosterone-induced transactivation activity of AR, as well as dexamethasone-induced transactivation activity of NR3C1, but does not affect estrogen-induced transactivation. Acts as a guanine nucleotide exchange factor (GEF) for RAN GTPase. May play an essential role in hemostasis and in maintaining microtubule dynamics with respect to both platelet shape and function. This chain is Ran-binding protein 10 (Ranbp10), found in Mus musculus (Mouse).